An 87-amino-acid chain; its full sequence is Neutrophil antibiotic peptide NP-3B (87 aa).

A signal peptide spans 1–19 (MRTLILLTTLLLLALHTQA). The propeptide occupies 20-58 (ESPQGSTKEAPDEEQDISVFFGGDKGTALQDAAVKAGVT). 3 disulfides stabilise this stretch: Cys-59-Cys-87, Cys-61-Cys-76, and Cys-66-Cys-86.

Belongs to the alpha-defensin family.

Its subcellular location is the secreted. Active in vitro against S.aureus, fungi, Gram-positive and Gram-negative bacteria and to a lesser extent against an enveloped virus. This Rattus norvegicus (Rat) protein is Neutrophil antibiotic peptide NP-3B.